Consider the following 334-residue polypeptide: DNA-directed RNA polymerase subunit alpha (334 aa).

Residues 1–231 (MNMIKIEPYI…KQMSIFGVDL (231 aa)) form an alpha N-terminal domain (alpha-NTD) region. The segment at 247 to 334 (ELKTLMIKID…NRKLAKLKSN (88 aa)) is alpha C-terminal domain (alpha-CTD).

It belongs to the RNA polymerase alpha chain family. As to quaternary structure, homodimer. The RNAP catalytic core consists of 2 alpha, 1 beta/beta' and 1 omega subunit. When a sigma factor is associated with the core the holoenzyme is formed, which can initiate transcription.

It carries out the reaction RNA(n) + a ribonucleoside 5'-triphosphate = RNA(n+1) + diphosphate. Its function is as follows. DNA-dependent RNA polymerase catalyzes the transcription of DNA into RNA using the four ribonucleoside triphosphates as substrates. The protein is DNA-directed RNA polymerase subunit alpha of Helicobacter hepaticus (strain ATCC 51449 / 3B1).